We begin with the raw amino-acid sequence, 225 residues long: Deoxyribose-phosphate aldolase (225 aa).

D94 (proton donor/acceptor) is an active-site residue. K158 (schiff-base intermediate with acetaldehyde) is an active-site residue. Catalysis depends on K187, which acts as the Proton donor/acceptor.

It belongs to the DeoC/FbaB aldolase family. DeoC type 1 subfamily.

It is found in the cytoplasm. The enzyme catalyses 2-deoxy-D-ribose 5-phosphate = D-glyceraldehyde 3-phosphate + acetaldehyde. The protein operates within carbohydrate degradation; 2-deoxy-D-ribose 1-phosphate degradation; D-glyceraldehyde 3-phosphate and acetaldehyde from 2-deoxy-alpha-D-ribose 1-phosphate: step 2/2. Its function is as follows. Catalyzes a reversible aldol reaction between acetaldehyde and D-glyceraldehyde 3-phosphate to generate 2-deoxy-D-ribose 5-phosphate. This is Deoxyribose-phosphate aldolase from Thermococcus gammatolerans (strain DSM 15229 / JCM 11827 / EJ3).